The primary structure comprises 187 residues: Large ribosomal subunit protein uL22 (187 aa).

This sequence belongs to the universal ribosomal protein uL22 family.

This is Large ribosomal subunit protein uL22 (RPL17) from Theileria annulata.